The chain runs to 64 residues: Small ribosomal subunit protein bS21 (64 aa).

Residues 42–64 are disordered; that stretch reads KKEKEKAAAKKRNKYNKRRSFYY. The span at 50–64 shows a compositional bias: basic residues; sequence AKKRNKYNKRRSFYY.

The protein belongs to the bacterial ribosomal protein bS21 family.

This Malacoplasma penetrans (strain HF-2) (Mycoplasma penetrans) protein is Small ribosomal subunit protein bS21.